A 200-amino-acid chain; its full sequence is Putative hydrolase MhqD (200 aa).

Residues serine 100, aspartate 150, and histidine 181 each act as charge relay system in the active site.

It belongs to the AB hydrolase superfamily. AB hydrolase 2 family.

The protein localises to the cytoplasm. Functionally, putative hydrolase that may contribute to the degradation of aromatic compounds. In Bacillus subtilis (strain 168), this protein is Putative hydrolase MhqD (mhqD).